The chain runs to 329 residues: Malate dehydrogenase (329 aa).

Residue 12 to 18 (GAAGQIG) participates in NAD(+) binding. Residues arginine 93 and arginine 99 each coordinate substrate. Residues asparagine 106, glutamine 113, and 130-132 (VGN) each bind NAD(+). Positions 132 and 163 each coordinate substrate. Histidine 188 functions as the Proton acceptor in the catalytic mechanism.

This sequence belongs to the LDH/MDH superfamily. MDH type 2 family.

It carries out the reaction (S)-malate + NAD(+) = oxaloacetate + NADH + H(+). Catalyzes the reversible oxidation of malate to oxaloacetate. In Streptomyces griseus subsp. griseus (strain JCM 4626 / CBS 651.72 / NBRC 13350 / KCC S-0626 / ISP 5235), this protein is Malate dehydrogenase.